A 298-amino-acid chain; its full sequence is Myozenin-1 (298 aa).

The disordered stretch occupies residues 1–34; it reads MPLSGTPAPNKKRKSSKLIMELTGGGQESSGLNL. A Phosphoserine modification is found at Ser-82. The segment at 105–173 is disordered; sequence FSYSKGSSGG…TGTGDQAGGE (69 aa). The span at 118–129 shows a compositional bias: low complexity; it reads GSSSAGQYGSGQ. Gly residues predominate over residues 136–172; that stretch reads SGSGSGGAGGPGSQTGRGGDAGTTGVGETGTGDQAGG.

It belongs to the myozenin family. Interacts with ACTN2, ACTN3, FLNA, FLNB, FLNC, LDB3, PPP3CA and TCAP. Interacts via its C-terminal region with MYOT.

It localises to the nucleus. It is found in the cell projection. The protein resides in the pseudopodium. Myozenins may serve as intracellular binding proteins involved in linking Z-disk proteins such as alpha-actinin, gamma-filamin, TCAP/telethonin, LDB3/ZASP and localizing calcineurin signaling to the sarcomere. Plays an important role in the modulation of calcineurin signaling. May play a role in myofibrillogenesis. The sequence is that of Myozenin-1 (MYOZ1) from Sus scrofa (Pig).